A 602-amino-acid polypeptide reads, in one-letter code: Glutaminase liver isoform, mitochondrial (602 aa).

Residues 1–14 (MRSMRALQNALSRA) constitute a mitochondrion transit peptide. 2 disordered regions span residues 1–28 (MRSM…HPSR) and 46–67 (QGRG…SNSG). Serine 219 provides a ligand contact to substrate. Lysine 253 bears the N6-succinyllysine mark. Position 268 (asparagine 268) interacts with substrate. N6-acetyllysine occurs at positions 279 and 284. Substrate-binding residues include glutamate 314 and asparagine 321. Lysine 329 is subject to N6-acetyllysine. Residues tyrosine 347, tyrosine 399, and valine 417 each contribute to the substrate site. 2 ANK repeats span residues 518 to 551 (DSRT…VKDR) and 552 to 585 (WGNI…SETQ).

The protein belongs to the glutaminase family. As to quaternary structure, homotetramer, dimer of dimers. Does not assemble into higher oligomers. Interacts with the PDZ domain of the syntrophin SNTA1. Interacts with the PDZ domain of TAX1BP3. In terms of tissue distribution, liver specific.

The protein localises to the mitochondrion. It catalyses the reaction L-glutamine + H2O = L-glutamate + NH4(+). Its function is as follows. Plays an important role in the regulation of glutamine catabolism. Promotes mitochondrial respiration and increases ATP generation in cells by catalyzing the synthesis of glutamate and alpha-ketoglutarate. Increases cellular anti-oxidant function via NADH and glutathione production. May play a role in preventing tumor proliferation. In Rattus norvegicus (Rat), this protein is Glutaminase liver isoform, mitochondrial (Gls2).